Reading from the N-terminus, the 564-residue chain is Potassium-transporting ATPase potassium-binding subunit (564 aa).

The next 10 helical transmembrane spans lie at 4 to 24, 67 to 87, 135 to 155, 179 to 199, 254 to 274, 286 to 306, 382 to 402, 420 to 440, 487 to 507, and 528 to 548; these read YDYWLIIAFFAVVLVPAPFLG, MLALLAFNLAGFLLLFAILLF, AGLTVQNFVSAATGLAVLVAL, LYGLLPLCLVLALFLVWQGVP, WANLFELAAIILIPVALVFTF, AILGCMLALFLIGGATSLWAE, AGMYGMLLNVLIAVFLAGLMI, LLVVTLLVMPVGVLVLGAIAA, LMLGLGMLIGRFGYILPVLAL, and GPLFVTLLTVTILLVGGLTFL.

It belongs to the KdpA family. In terms of assembly, the system is composed of three essential subunits: KdpA, KdpB and KdpC.

The protein resides in the cell inner membrane. In terms of biological role, part of the high-affinity ATP-driven potassium transport (or Kdp) system, which catalyzes the hydrolysis of ATP coupled with the electrogenic transport of potassium into the cytoplasm. This subunit binds the periplasmic potassium ions and delivers the ions to the membrane domain of KdpB through an intramembrane tunnel. In Pseudomonas fluorescens (strain SBW25), this protein is Potassium-transporting ATPase potassium-binding subunit.